The sequence spans 622 residues: Low affinity potassium transport system protein Kup (622 aa).

12 helical membrane-spanning segments follow: residues Leu9 to Leu29, Val49 to Leu69, Val103 to Ile123, Pro137 to Ile157, Val165 to Leu185, Val213 to Ala233, Trp247 to Leu267, Pro276 to Ala296, Ile337 to Phe357, Leu363 to Thr383, Phe396 to Leu416, and Leu419 to Thr439.

The protein belongs to the HAK/KUP transporter (TC 2.A.72) family.

Its subcellular location is the cell inner membrane. The enzyme catalyses K(+)(in) + H(+)(in) = K(+)(out) + H(+)(out). In terms of biological role, responsible for the low-affinity transport of potassium into the cell. Likely operates as a K(+):H(+) symporter. The sequence is that of Low affinity potassium transport system protein Kup from Shigella sonnei (strain Ss046).